A 197-amino-acid chain; its full sequence is Large ribosomal subunit protein eL15 (197 aa).

A disordered region spans residues 175-197; it reads LRTGRKGSSKSRPSIRANGRLRR.

The protein belongs to the eukaryotic ribosomal protein eL15 family.

This is Large ribosomal subunit protein eL15 (rpl15e) from Thermoplasma volcanium (strain ATCC 51530 / DSM 4299 / JCM 9571 / NBRC 15438 / GSS1).